Consider the following 1097-residue polypeptide: Leukemia inhibitory factor receptor (1097 aa).

The N-terminal stretch at methionine 1–serine 44 is a signal peptide. The Extracellular segment spans residues glutamate 45–serine 833. Residues lysine 46 to asparagine 131 enclose the Fibronectin type-III 1 domain. Intrachain disulfides connect cysteine 55–cysteine 65 and cysteine 82–cysteine 90. 6 N-linked (GlcNAc...) asparagine glycosylation sites follow: asparagine 85, asparagine 131, asparagine 143, asparagine 191, asparagine 243, and asparagine 303. Cysteine 213 and cysteine 270 are oxidised to a cystine. 5 Fibronectin type-III domains span residues proline 332 to arginine 434, isoleucine 435 to isoleucine 534, glycine 538 to aspartate 629, proline 627 to isoleucine 719, and proline 724 to serine 833. Cysteine 341 and cysteine 351 are oxidised to a cystine. N-linked (GlcNAc...) asparagine glycans are attached at residues asparagine 366, asparagine 390, asparagine 407, asparagine 426, asparagine 445, asparagine 471, asparagine 481, and asparagine 489. Cysteine 466 and cysteine 511 are joined by a disulfide. A WSXWS motif motif is present at residues tryptophan 519–serine 523. N-linked (GlcNAc...) asparagine glycans are attached at residues asparagine 572, asparagine 652, asparagine 663, asparagine 680, asparagine 729, and asparagine 787. Residues valine 834–threonine 854 traverse the membrane as a helical segment. The Cytoplasmic segment spans residues serine 855 to aspartate 1097. Positions phenylalanine 869–glutamate 877 match the Box 1 motif motif. Serine 927 is modified (phosphoserine). Disordered regions lie at residues glutamine 982–methionine 1005 and leucine 1022–aspartate 1097. Composition is skewed to polar residues over residues alanine 1032 to glutamine 1067 and serine 1086 to aspartate 1097. The residue at position 1044 (serine 1044) is a Phosphoserine.

Belongs to the type I cytokine receptor family. Type 2 subfamily. As to quaternary structure, heterodimer composed of LIFR and IL6ST. The heterodimer formed by LIFR and IL6ST interacts with the complex formed by CNTF and CNTFR.

It is found in the cell membrane. Functionally, signal-transducing molecule. May have a common pathway with IL6ST. The soluble form inhibits the biological activity of LIF by blocking its binding to receptors on target cells. The chain is Leukemia inhibitory factor receptor (LIFR) from Canis lupus familiaris (Dog).